The sequence spans 613 residues: Protein translocase subunit SecD (613 aa).

The next 6 membrane-spanning stretches (helical) occupy residues 10 to 30 (ALVVAVAILSIYQLVPSWFYF), 452 to 472 (KGTLAALVGLALVVVFMVVYY), 477 to 497 (LVADVALALNGLLVLAVMSMI), 503 to 523 (LPGIAGFVLTLGMAVDANVLI), 548 to 568 (VFWTIVDSHVTTLVAGVVLFQ), and 576 to 596 (GFAVTLIIGLVASMFTSIVVT).

The protein belongs to the SecD/SecF family. SecD subfamily. Forms a complex with SecF. Part of the essential Sec protein translocation apparatus which comprises SecA, SecYEG and auxiliary proteins SecDF-YajC and YidC.

It localises to the cell inner membrane. Part of the Sec protein translocase complex. Interacts with the SecYEG preprotein conducting channel. SecDF uses the proton motive force (PMF) to complete protein translocation after the ATP-dependent function of SecA. The sequence is that of Protein translocase subunit SecD from Anaeromyxobacter dehalogenans (strain 2CP-C).